The chain runs to 232 residues: 7-cyano-7-deazaguanine synthase (232 aa).

8–18 (FSGGQDSTTCL) contributes to the ATP binding site. Residues Cys189, Cys198, Cys201, and Cys204 each contribute to the Zn(2+) site.

It belongs to the QueC family. It depends on Zn(2+) as a cofactor.

It carries out the reaction 7-carboxy-7-deazaguanine + NH4(+) + ATP = 7-cyano-7-deazaguanine + ADP + phosphate + H2O + H(+). Its pathway is purine metabolism; 7-cyano-7-deazaguanine biosynthesis. In terms of biological role, catalyzes the ATP-dependent conversion of 7-carboxy-7-deazaguanine (CDG) to 7-cyano-7-deazaguanine (preQ(0)). The polypeptide is 7-cyano-7-deazaguanine synthase (Proteus mirabilis (strain HI4320)).